A 298-amino-acid polypeptide reads, in one-letter code: NAD kinase (298 aa).

The Proton acceptor role is filled by aspartate 80. NAD(+)-binding positions include 80 to 81 (DG), 154 to 155 (ND), arginine 182, aspartate 184, 195 to 200 (TAYALS), alanine 219, and glutamine 253.

It belongs to the NAD kinase family. Requires a divalent metal cation as cofactor.

It localises to the cytoplasm. It catalyses the reaction NAD(+) + ATP = ADP + NADP(+) + H(+). Involved in the regulation of the intracellular balance of NAD and NADP, and is a key enzyme in the biosynthesis of NADP. Catalyzes specifically the phosphorylation on 2'-hydroxyl of the adenosine moiety of NAD to yield NADP. This Acidovorax sp. (strain JS42) protein is NAD kinase.